The sequence spans 247 residues: ATP synthase subunit a, chloroplastic (247 aa).

5 consecutive transmembrane segments (helical) span residues glutamine 38–valine 58, valine 95–leucine 115, isoleucine 134–serine 154, leucine 199–leucine 219, and glycine 220–glycine 240.

The protein belongs to the ATPase A chain family. In terms of assembly, F-type ATPases have 2 components, CF(1) - the catalytic core - and CF(0) - the membrane proton channel. CF(1) has five subunits: alpha(3), beta(3), gamma(1), delta(1), epsilon(1). CF(0) has four main subunits: a, b, b' and c.

Its subcellular location is the plastid. It is found in the chloroplast thylakoid membrane. Key component of the proton channel; it plays a direct role in the translocation of protons across the membrane. The chain is ATP synthase subunit a, chloroplastic from Oryza sativa subsp. indica (Rice).